Reading from the N-terminus, the 102-residue chain is Citrate lyase acyl carrier protein (102 aa).

The residue at position 14 (serine 14) is an O-(phosphoribosyl dephospho-coenzyme A)serine.

This sequence belongs to the CitD family. In terms of assembly, oligomer with a subunit composition of (alpha,beta,gamma)6.

It localises to the cytoplasm. Covalent carrier of the coenzyme of citrate lyase. The polypeptide is Citrate lyase acyl carrier protein (Serratia proteamaculans (strain 568)).